The primary structure comprises 293 residues: Elongation factor Ts (293 aa).

The segment at 79–82 is involved in Mg(2+) ion dislocation from EF-Tu; it reads TDFV.

The protein belongs to the EF-Ts family.

Its subcellular location is the cytoplasm. In terms of biological role, associates with the EF-Tu.GDP complex and induces the exchange of GDP to GTP. It remains bound to the aminoacyl-tRNA.EF-Tu.GTP complex up to the GTP hydrolysis stage on the ribosome. The chain is Elongation factor Ts from Bacillus licheniformis (strain ATCC 14580 / DSM 13 / JCM 2505 / CCUG 7422 / NBRC 12200 / NCIMB 9375 / NCTC 10341 / NRRL NRS-1264 / Gibson 46).